Consider the following 124-residue polypeptide: Large ribosomal subunit protein bL12 (124 aa).

A compositionally biased stretch (basic and acidic residues) spans 101–115 (ALSKDDAEKAKKELE). The interval 101–124 (ALSKDDAEKAKKELEEAGATVELK) is disordered.

The protein belongs to the bacterial ribosomal protein bL12 family. Homodimer. Part of the ribosomal stalk of the 50S ribosomal subunit. Forms a multimeric L10(L12)X complex, where L10 forms an elongated spine to which 2 to 4 L12 dimers bind in a sequential fashion. Binds GTP-bound translation factors.

In terms of biological role, forms part of the ribosomal stalk which helps the ribosome interact with GTP-bound translation factors. Is thus essential for accurate translation. The protein is Large ribosomal subunit protein bL12 of Hahella chejuensis (strain KCTC 2396).